A 356-amino-acid polypeptide reads, in one-letter code: DNA polymerase IV (356 aa).

In terms of domain architecture, UmuC spans 6–187 (IIHIDMDYFF…LDIGDFPGVG (182 aa)). Positions 10 and 105 each coordinate Mg(2+). The active site involves Glu-106.

Belongs to the DNA polymerase type-Y family. Monomer. Mg(2+) serves as cofactor.

It is found in the cytoplasm. It catalyses the reaction DNA(n) + a 2'-deoxyribonucleoside 5'-triphosphate = DNA(n+1) + diphosphate. In terms of biological role, poorly processive, error-prone DNA polymerase involved in untargeted mutagenesis. Copies undamaged DNA at stalled replication forks, which arise in vivo from mismatched or misaligned primer ends. These misaligned primers can be extended by PolIV. Exhibits no 3'-5' exonuclease (proofreading) activity. May be involved in translesional synthesis, in conjunction with the beta clamp from PolIII. This is DNA polymerase IV from Staphylococcus epidermidis (strain ATCC 12228 / FDA PCI 1200).